Here is a 248-residue protein sequence, read N- to C-terminus: Triosephosphate isomerase (248 aa).

Asn-12 and Lys-14 together coordinate substrate. Lys-14 bears the N6-acetyllysine mark. A 3'-nitrotyrosine modification is found at Tyr-68. The active-site Electrophile is His-96. Ser-106 bears the Phosphoserine mark. Lys-142 is covalently cross-linked (Glycyl lysine isopeptide (Lys-Gly) (interchain with G-Cter in SUMO1)). Lys-149 is modified (N6-succinyllysine). Lys-156 carries the N6-acetyllysine; alternate modification. Lys-156 bears the N6-succinyllysine; alternate mark. The Proton acceptor role is filled by Glu-166. At Thr-173 the chain carries Phosphothreonine. Lys-194 carries the N6-acetyllysine; alternate modification. Residue Lys-194 is modified to N6-succinyllysine; alternate. Lys-194 is subject to N6-methyllysine; alternate. Tyr-209 is subject to 3'-nitrotyrosine. Residue Ser-212 is modified to Phosphoserine. Residue Thr-214 is modified to Phosphothreonine. At Ser-223 the chain carries Phosphoserine. Position 238 is an N6-acetyllysine (Lys-238).

This sequence belongs to the triosephosphate isomerase family. As to quaternary structure, homodimer.

It is found in the cytoplasm. The catalysed reaction is dihydroxyacetone phosphate = methylglyoxal + phosphate. The enzyme catalyses D-glyceraldehyde 3-phosphate = dihydroxyacetone phosphate. Its pathway is carbohydrate degradation; glycolysis; D-glyceraldehyde 3-phosphate from glycerone phosphate: step 1/1. It participates in carbohydrate biosynthesis; gluconeogenesis. Its function is as follows. Triosephosphate isomerase is an extremely efficient metabolic enzyme that catalyzes the interconversion between dihydroxyacetone phosphate (DHAP) and D-glyceraldehyde-3-phosphate (G3P) in glycolysis and gluconeogenesis. Functionally, it is also responsible for the non-negligible production of methylglyoxal a reactive cytotoxic side-product that modifies and can alter proteins, DNA and lipids. This chain is Triosephosphate isomerase (TPI1), found in Sus scrofa (Pig).